The primary structure comprises 518 residues: uncharacterized protein (518 aa).

Transmembrane regions (helical) follow at residues 13–33 (WAIS…GIIS), 49–69 (WGSW…PIVG), 86–106 (CLFG…LFLI), 109–129 (LIQA…ILAT), 141–161 (LLGA…SFLL), 169–189 (WLFL…ACFI), 202–222 (AAGI…MTNL), 231–251 (LGNP…AALI), 280–300 (LIIG…PSYV), 312–332 (GYWM…GGAL), 341–361 (TVIL…LWVT), 365–385 (EFVI…GAPL), 410–430 (IGLT…FDQI), and 493–513 (LYAA…IPAF).

Belongs to the major facilitator superfamily. TCR/Tet family.

Its subcellular location is the cell membrane. This is an uncharacterized protein from Bacillus subtilis (strain 168).